A 649-amino-acid polypeptide reads, in one-letter code: 1,4-alpha-glucan branching enzyme GlgB (649 aa).

D315 functions as the Nucleophile in the catalytic mechanism. The active-site Proton donor is the E366.

This sequence belongs to the glycosyl hydrolase 13 family. GlgB subfamily. In terms of assembly, monomer.

The enzyme catalyses Transfers a segment of a (1-&gt;4)-alpha-D-glucan chain to a primary hydroxy group in a similar glucan chain.. Its pathway is glycan biosynthesis; glycogen biosynthesis. Catalyzes the formation of the alpha-1,6-glucosidic linkages in glycogen by scission of a 1,4-alpha-linked oligosaccharide from growing alpha-1,4-glucan chains and the subsequent attachment of the oligosaccharide to the alpha-1,6 position. This Ligilactobacillus salivarius (strain UCC118) (Lactobacillus salivarius) protein is 1,4-alpha-glucan branching enzyme GlgB.